Consider the following 805-residue polypeptide: Phenylalanine--tRNA ligase beta subunit (805 aa).

The 110-residue stretch at 39–148 folds into the tRNA-binding domain; the sequence is APPFTGVVVA…AALRPGTDIR (110 aa). Residues 399 to 474 enclose the B5 domain; sequence PVREPVRMRL…RVYGFERIPD (76 aa). Positions 452, 458, 461, and 462 each coordinate Mg(2+). Positions 703-804 constitute an FDX-ACB domain; it reads SRQPAVVRDL…LVAAHNARQR (102 aa).

This sequence belongs to the phenylalanyl-tRNA synthetase beta subunit family. Type 1 subfamily. As to quaternary structure, tetramer of two alpha and two beta subunits. Mg(2+) is required as a cofactor.

The protein resides in the cytoplasm. It carries out the reaction tRNA(Phe) + L-phenylalanine + ATP = L-phenylalanyl-tRNA(Phe) + AMP + diphosphate + H(+). This Bordetella parapertussis (strain 12822 / ATCC BAA-587 / NCTC 13253) protein is Phenylalanine--tRNA ligase beta subunit.